The following is a 230-amino-acid chain: 3-isopropylmalate dehydratase small subunit (230 aa).

This sequence belongs to the LeuD family. LeuD type 1 subfamily. Heterodimer of LeuC and LeuD.

The catalysed reaction is (2R,3S)-3-isopropylmalate = (2S)-2-isopropylmalate. It functions in the pathway amino-acid biosynthesis; L-leucine biosynthesis; L-leucine from 3-methyl-2-oxobutanoate: step 2/4. In terms of biological role, catalyzes the isomerization between 2-isopropylmalate and 3-isopropylmalate, via the formation of 2-isopropylmaleate. The sequence is that of 3-isopropylmalate dehydratase small subunit from Bifidobacterium longum (strain DJO10A).